The primary structure comprises 129 residues: NADH-ubiquinone oxidoreductase chain 3 (129 aa).

A run of 3 helical transmembrane segments spans residues 4 to 24 (FYMY…WLLA), 48 to 68 (AAFS…DLEI), and 82 to 102 (GLYG…AFIL).

This sequence belongs to the complex I subunit 3 family.

The protein localises to the mitochondrion membrane. The catalysed reaction is a ubiquinone + NADH + 5 H(+)(in) = a ubiquinol + NAD(+) + 4 H(+)(out). Its function is as follows. Core subunit of the mitochondrial membrane respiratory chain NADH dehydrogenase (Complex I) that is believed to belong to the minimal assembly required for catalysis. Complex I functions in the transfer of electrons from NADH to the respiratory chain. The immediate electron acceptor for the enzyme is believed to be ubiquinone. The protein is NADH-ubiquinone oxidoreductase chain 3 (NAD3) of Candida albicans (strain SC5314 / ATCC MYA-2876) (Yeast).